Here is a 377-residue protein sequence, read N- to C-terminus: UDP-N-acetylglucosamine--N-acetylmuramyl-(pentapeptide) pyrophosphoryl-undecaprenol N-acetylglucosamine transferase (377 aa).

Residues 11-13, asparagine 123, arginine 164, serine 194, and glutamine 295 each bind UDP-N-acetyl-alpha-D-glucosamine; that span reads TGG.

Belongs to the glycosyltransferase 28 family. MurG subfamily.

The protein resides in the cell inner membrane. It carries out the reaction di-trans,octa-cis-undecaprenyl diphospho-N-acetyl-alpha-D-muramoyl-L-alanyl-D-glutamyl-meso-2,6-diaminopimeloyl-D-alanyl-D-alanine + UDP-N-acetyl-alpha-D-glucosamine = di-trans,octa-cis-undecaprenyl diphospho-[N-acetyl-alpha-D-glucosaminyl-(1-&gt;4)]-N-acetyl-alpha-D-muramoyl-L-alanyl-D-glutamyl-meso-2,6-diaminopimeloyl-D-alanyl-D-alanine + UDP + H(+). It functions in the pathway cell wall biogenesis; peptidoglycan biosynthesis. Functionally, cell wall formation. Catalyzes the transfer of a GlcNAc subunit on undecaprenyl-pyrophosphoryl-MurNAc-pentapeptide (lipid intermediate I) to form undecaprenyl-pyrophosphoryl-MurNAc-(pentapeptide)GlcNAc (lipid intermediate II). The protein is UDP-N-acetylglucosamine--N-acetylmuramyl-(pentapeptide) pyrophosphoryl-undecaprenol N-acetylglucosamine transferase of Opitutus terrae (strain DSM 11246 / JCM 15787 / PB90-1).